Consider the following 110-residue polypeptide: Large ribosomal subunit protein uL22 (110 aa).

The protein belongs to the universal ribosomal protein uL22 family. As to quaternary structure, part of the 50S ribosomal subunit.

This protein binds specifically to 23S rRNA; its binding is stimulated by other ribosomal proteins, e.g. L4, L17, and L20. It is important during the early stages of 50S assembly. It makes multiple contacts with different domains of the 23S rRNA in the assembled 50S subunit and ribosome. Functionally, the globular domain of the protein is located near the polypeptide exit tunnel on the outside of the subunit, while an extended beta-hairpin is found that lines the wall of the exit tunnel in the center of the 70S ribosome. The sequence is that of Large ribosomal subunit protein uL22 from Syntrophus aciditrophicus (strain SB).